Consider the following 60-residue polypeptide: Chromatin protein Cren7 (60 aa).

Belongs to the Cren7 family. Monomer. In terms of processing, methylated at multiple sites, to varying extents.

Its subcellular location is the chromosome. It is found in the cytoplasm. In terms of biological role, a chromatin protein, binds double-stranded DNA without sequence specificity. Constrains negative DNA supercoils. The sequence is that of Chromatin protein Cren7 from Saccharolobus islandicus (strain M.16.4 / Kamchatka #3) (Sulfolobus islandicus).